Consider the following 430-residue polypeptide: Serine hydroxymethyltransferase (430 aa).

120–122 provides a ligand contact to (6S)-5,6,7,8-tetrahydrofolate; the sequence is GHI. The residue at position 226 (Lys226) is an N6-(pyridoxal phosphate)lysine.

The protein belongs to the SHMT family. As to quaternary structure, homodimer. Pyridoxal 5'-phosphate is required as a cofactor.

It localises to the cytoplasm. It participates in amino-acid biosynthesis; glycine biosynthesis; glycine from L-serine: step 1/1. Catalyzes the reversible interconversion of serine and glycine with a modified folate serving as the one-carbon carrier. Also exhibits a pteridine-independent aldolase activity toward beta-hydroxyamino acids, producing glycine and aldehydes, via a retro-aldol mechanism. The sequence is that of Serine hydroxymethyltransferase from Pyrobaculum islandicum (strain DSM 4184 / JCM 9189 / GEO3).